The primary structure comprises 397 residues: Na(+)/H(+) antiporter NhaA (397 aa).

12 consecutive transmembrane segments (helical) span residues 14-34 (ASGILLLTFAMFAMLFANTPL), 36-56 (DLYFDFLSMPVSIQIGLFSIY), 59-79 (LLMWVNDGFMAVFFVLIGLEV), 95-115 (IFPAIGALGGMIVPALVFTLI), 125-145 (GWAIPMATDIAFALGVLGLLG), 154-174 (IFLLALAIIDDLGAIVVIAIF), 177-197 (HELSTTALISAAIAIAVLIIM), 204-224 (AICAYMVVGLILWASVLKSGV), 254-274 (LLAPWCSFVILPLFAFSNAGV), 292-312 (VALGLLVGKTLGVFSFSFLAV), 328-348 (IFAVSVLCGIGFTMSMFLAGL), and 365-385 (LGILIGSGISAVLGYYLLKLC).

The protein belongs to the NhaA Na(+)/H(+) (TC 2.A.33) antiporter family.

The protein localises to the cell inner membrane. It catalyses the reaction Na(+)(in) + 2 H(+)(out) = Na(+)(out) + 2 H(+)(in). Functionally, na(+)/H(+) antiporter that extrudes sodium in exchange for external protons. In Glaesserella parasuis serovar 5 (strain SH0165) (Haemophilus parasuis), this protein is Na(+)/H(+) antiporter NhaA.